A 393-amino-acid chain; its full sequence is S-adenosylmethionine synthase (393 aa).

Histidine 17 contributes to the ATP binding site. Aspartate 19 is a Mg(2+) binding site. Residue glutamate 45 participates in K(+) binding. L-methionine contacts are provided by glutamate 58 and glutamine 106. Residues 106-116 form a flexible loop region; that stretch reads QSAHIAQGVNA. Residues 171-173, 237-238, aspartate 246, 252-253, alanine 269, and lysine 273 contribute to the ATP site; these read DAK, KF, and RK. Aspartate 246 contacts L-methionine. Position 277 (lysine 277) interacts with L-methionine.

The protein belongs to the AdoMet synthase family. Homotetramer; dimer of dimers. Mg(2+) is required as a cofactor. It depends on K(+) as a cofactor.

It is found in the cytoplasm. The catalysed reaction is L-methionine + ATP + H2O = S-adenosyl-L-methionine + phosphate + diphosphate. The protein operates within amino-acid biosynthesis; S-adenosyl-L-methionine biosynthesis; S-adenosyl-L-methionine from L-methionine: step 1/1. Catalyzes the formation of S-adenosylmethionine (AdoMet) from methionine and ATP. The overall synthetic reaction is composed of two sequential steps, AdoMet formation and the subsequent tripolyphosphate hydrolysis which occurs prior to release of AdoMet from the enzyme. The chain is S-adenosylmethionine synthase from Ruegeria pomeroyi (strain ATCC 700808 / DSM 15171 / DSS-3) (Silicibacter pomeroyi).